The sequence spans 239 residues: uncharacterized protein (239 aa).

The next 8 helical transmembrane spans lie at 4–24 (LIPKQHGAWAMLLIPFLLGMV), 29–49 (VIWHIPLFLGWLFLYLAVYPV), 61–81 (YQKWMCYYGFPTCCFLMISVF), 84–104 (PPLIWVGVSLLPLFLIHMYFA), 116–136 (VAGVLFFCSGGFASCWLGMGT), 139–159 (GWAWFIFLQSALFFIGSSFYV), 180–200 (LLLPFLSALFGAGWAFLAFIP), and 218–238 (IGILEIVNACFFLAVMCLFIT).

It to H.influenzae HI_1626.

The protein localises to the cell membrane. This is an uncharacterized protein from Bacillus subtilis (strain 168).